A 347-amino-acid chain; its full sequence is Isocitrate dehydrogenase [NAD] subunit alpha, mitochondrial (347 aa).

The N-terminal 8 residues, 1–8, are a transit peptide targeting the mitochondrion; that stretch reads QKQVTRGF. 14–42 contacts NAD(+); sequence TVTLIPGDGIGPEISAAVMKIFDAAKAPI. An N6-succinyllysine modification is found at lysine 58. Residue threonine 82 is modified to Phosphothreonine. Substrate is bound by residues arginine 96, arginine 106, and arginine 127. N6-acetyllysine is present on lysine 204. Mg(2+)-binding residues include aspartate 214, aspartate 238, and aspartate 242. Lysine 324 carries the post-translational modification N6-acetyllysine; alternate. At lysine 324 the chain carries N6-succinyllysine; alternate. Lysine 331 is modified (N6-succinyllysine).

The protein belongs to the isocitrate and isopropylmalate dehydrogenases family. In terms of assembly, heterooligomer of subunits alpha (IDH3A), beta (IDH3B), and gamma (IDH3G) in the apparent ratio of 2:1:1. The heterodimer containing one IDH3A and one IDH3B subunit and the heterodimer containing one IDH3A and one IDH3G subunit assemble into a heterotetramer (which contains two subunits of IDH3A, one of IDH3B and one of IDH3G) and further into the heterooctamer. The cofactor is Mg(2+). It depends on Mn(2+) as a cofactor.

Its subcellular location is the mitochondrion. The catalysed reaction is D-threo-isocitrate + NAD(+) = 2-oxoglutarate + CO2 + NADH. With respect to regulation, the heterotetramer and the heterodimer composed of IDH3A and IDH3G subunits can be allosterically activated by citrate (CIT) or/and ADP, and the two activators can act independently or synergistically. The heterodimer composed of IDH3A and IDH3B subunits cannot be allosterically regulated and the allosteric regulation of the heterotetramer is through the IDH3G subunit and not the IDH3B subunit. The IDH3G subunit contains the allosteric site which consists of a CIT-binding site and an ADP-binding site, and the binding of CIT and ADP causes conformational changes at the allosteric site which are transmitted to the active site in the catalytic subunit (IDH3A) through a cascade of conformational changes at the heterodimer interface, leading to stabilization of the isocitrate-binding at the active site and thus activation of the enzyme. ATP can activate the heterotetramer and the heterodimer composed of IDH3A and IDH3G subunits at low concentrations but inhibits their activities at high concentrations, whereas ATP exhibits only inhibitory effect on the heterodimer composed of IDH3A and IDH3B subunits. Its function is as follows. Catalytic subunit of the enzyme which catalyzes the decarboxylation of isocitrate (ICT) into alpha-ketoglutarate. The heterodimer composed of the alpha (IDH3A) and beta (IDH3B) subunits and the heterodimer composed of the alpha (IDH3A) and gamma (IDH3G) subunits, have considerable basal activity but the full activity of the heterotetramer (containing two subunits of IDH3A, one of IDH3B and one of IDH3G) requires the assembly and cooperative function of both heterodimers. The protein is Isocitrate dehydrogenase [NAD] subunit alpha, mitochondrial (IDH3A) of Macaca fascicularis (Crab-eating macaque).